The primary structure comprises 388 residues: Xylose isomerase (388 aa).

Residues His54 and Asp57 contribute to the active site. 7 residues coordinate Mg(2+): Glu181, Glu217, His220, Asp245, Asp255, Asp257, and Asp287.

Belongs to the xylose isomerase family. As to quaternary structure, homotetramer. The cofactor is Mg(2+).

The protein resides in the cytoplasm. The catalysed reaction is alpha-D-xylose = alpha-D-xylulofuranose. Functionally, involved in D-xylose catabolism. This Streptomyces murinus protein is Xylose isomerase (xylA).